Consider the following 206-residue polypeptide: Emopamil-binding protein-like (206 aa).

4 helical membrane-spanning segments follow: residues 10–30 (EAGG…ALGL), 42–62 (GALI…GPFV), 101–121 (VEIL…YAIV), and 165–185 (CWLY…LLLW). An EXPERA domain is found at 39–184 (ADRGALIWLC…VWVLIPGLLL (146 aa)).

This sequence belongs to the EBP family. As to quaternary structure, homodimer. Widely expressed with highest levels in liver, lung and kidney.

Its subcellular location is the endoplasmic reticulum membrane. In terms of biological role, does not possess sterol isomerase activity and does not bind sigma ligands. The protein is Emopamil-binding protein-like (EBPL) of Homo sapiens (Human).